The sequence spans 419 residues: D(4) dopamine receptor (419 aa).

Topologically, residues 1 to 29 (MGNRSTADADGLLAGRGPAAGASAGASAG) are extracellular. Asparagine 3 is a glycosylation site (N-linked (GlcNAc...) asparagine). A helical membrane pass occupies residues 30–50 (LAGQGAAALVGGVLLIGAVLA). The Cytoplasmic segment spans residues 51-71 (GNSLVCVSVATERALQTPTNS). A helical transmembrane segment spans residues 72 to 92 (FIVSLAAADLLLALLVLPLFV). A Na(+)-binding site is contributed by aspartate 80. Topologically, residues 93–110 (YSEVQGGAWLLSPRLCDA) are extracellular. Cysteine 108 and cysteine 185 are joined by a disulfide. Residues 111 to 131 (LMAMDVMLCTASIFNLCAISV) form a helical membrane-spanning segment. Aspartate 115 lines the (2R,3R)-nemonapride pocket. Residue serine 122 coordinates Na(+). Topologically, residues 132–152 (DRFVAVAVPLRYNRQGGSRRQ) are cytoplasmic. A helical membrane pass occupies residues 153-173 (LLLIGATWLLSAAVAAPVLCG). Residues 174–192 (LNDVRGRDPAVCRLEDRDY) lie on the Extracellular side of the membrane. The chain crosses the membrane as a helical span at residues 193-213 (VVYSSVCSFFLPCPLMLLLYW). Serine 196 is a binding site for (2R,3R)-nemonapride. The Cytoplasmic portion of the chain corresponds to 214 to 346 (ATFRGLQRWE…ITGRERKAMR (133 aa)). The tract at residues 230-264 (LHGRAPRRPSGPGPPSPTPPAPRLPQDPCGPDCAP) is disordered. Over residues 238–254 (PSGPGPPSPTPPAPRLP) the composition is skewed to pro residues. One copy of the 1; approximate repeat lies at 249 to 264 (PAPRLPQDPCGPDCAP). Residues 249 to 312 (PAPRLPQDPC…PDPCGSNCAP (64 aa)) form a 4 X 16 AA approximate tandem repeats of [PA]-A-P-G-L-P-[PQR]-[DG]-P-C-G-P-D-C-A-P region. A run of 2 repeats spans residues 265–280 (PAPG…DCAP) and 281–296 (AAPS…DCAP). The 4; approximate repeat unit spans residues 297–312 (PAPGLPPDPCGSNCAP). The tract at residues 317–336 (RAAALPPQTPPQTRRRRRAK) is disordered. A helical transmembrane segment spans residues 347 to 367 (VLPVVVGAFLLCWTPFFVVHI). Topologically, residues 368–382 (TQALCPACSVPPRLV) are extracellular. An intrachain disulfide couples cysteine 372 to cysteine 375. The chain crosses the membrane as a helical span at residues 383 to 403 (SAVTWLGYVNSALNPVIYTVF). Residues 404-419 (NAEFRNVFRKALRACC) are Cytoplasmic-facing. A lipid anchor (S-palmitoyl cysteine) is attached at cysteine 419.

Belongs to the G-protein coupled receptor 1 family. Forms homo- and heterooligomers with DRD2. D4.7 allele exhibits higher affinity for homodimers compared to DRD2 heterodimers, while alleles D42. and 4.4 have similar affinities for both. The interaction with DRD2 may modulate agonist-induced downstream signaling. Interacts with CLIC6. Interacts with GPRASP1. May interact with ADORA2A. Interacts with KLHL12. Post-translationally, polyubiquitinated by the BCR(KLHL12) E3 ubiquitin ligase complex: polyubiquitination does not lead to degradation of DRD4 protein. Palmitoylated. Palmitoylation of the C-terminal Cys is important for normal expression at the cell membrane. As to expression, highly expressed in retina. Detected at much lower levels in brain, in amygdala, thalamus, hypothalamus, cerebellum and pituitary.

The protein localises to the cell membrane. Its activity is regulated as follows. Signaling in response to agonists such as dopamine, epinephrine and norepinephrine is modulated by Na(+); lower Na(+) levels result in higher receptor activity (in vitro). Its function is as follows. Dopamine receptor responsible for neuronal signaling in the mesolimbic system of the brain, an area of the brain that regulates emotion and complex behavior. Activated by dopamine, but also by epinephrine and norepinephrine, and by numerous synthetic agonists and drugs. Agonist binding triggers signaling via G proteins that inhibit adenylyl cyclase. Modulates the circadian rhythm of contrast sensitivity by regulating the rhythmic expression of NPAS2 in the retinal ganglion cells. The sequence is that of D(4) dopamine receptor (DRD4) from Homo sapiens (Human).